The chain runs to 548 residues: Ran-binding protein 9 (548 aa).

Residues 1–23 (MSSPPLHGLSSVGHLSRDPPPRS) are disordered. The region spanning 2–189 (SSPPLHGLSS…VDANFGQSPF (188 aa)) is the B30.2/SPRY domain. A LisH domain is found at 217–249 (WQSMIQRMVSSYLVHHGYCSTAEAFAKSTDQTV). The region spanning 255-312 (SIKNRQRIQKLVLSGRMGEAIETTQQLYPSLLERNPNLLFTLKVRQFIEMVNGTDSEV) is the CTLH domain.

This sequence belongs to the RANBP9/10 family. Identified in the CTLH complex that contains at least MAEA, RMND5A (or alternatively its paralog RMND5B), GID8, WDR26, and RANBP9 and/or RANBP10.

Its subcellular location is the cytoplasm. The protein localises to the cell membrane. The protein resides in the nucleus. In terms of biological role, may act as scaffolding protein, and as adapter protein to couple membrane receptors to intracellular signaling pathways. Acts as a mediator of cell spreading and actin cytoskeleton rearrangement. Core component of the CTLH E3 ubiquitin-protein ligase complex that mediates ubiquitination and subsequent proteasomal degradation of target proteins. This chain is Ran-binding protein 9 (ranbp9), found in Xenopus laevis (African clawed frog).